A 282-amino-acid chain; its full sequence is MELKDYFPEMQVGPHPLGDKEWVSVKEGDQYVHFPKSCLSEKERLLLEVGLGQYEVLQPLGSPWQRYLLDHQGNPPQLFETSQFIYLNHQQVLPADLVELLQQMIAGLEVILPISTTQTAFLCRQATSIKVLRSLEGLLPTLESDFGLALTMFVGNAWYQVAAGTLRECFEEECQLLTAYLKQKSGGKLLTFAEVMLWSILSHQSFPALTRQFHQFLNPQSDMADVVHALWSEHGNLVQTAQRLYIHRNSLQYKLDKFAQQSGLHLKQLDDLAFAYLFLLKY.

Not essential for viability or growth. Nevertheless, uncontrolled production in E.coli is detrimental to the normal physiology of the bacteria. The polypeptide is Leucine-rich protein (lrp) (Streptococcus dysgalactiae subsp. equisimilis (Streptococcus equisimilis)).